The primary structure comprises 470 residues: ATP synthase subunit beta (470 aa).

ATP is bound at residue 158 to 165 (GGAGVGKT).

Belongs to the ATPase alpha/beta chains family. F-type ATPases have 2 components, CF(1) - the catalytic core - and CF(0) - the membrane proton channel. CF(1) has five subunits: alpha(3), beta(3), gamma(1), delta(1), epsilon(1). CF(0) has three main subunits: a(1), b(2) and c(9-12). The alpha and beta chains form an alternating ring which encloses part of the gamma chain. CF(1) is attached to CF(0) by a central stalk formed by the gamma and epsilon chains, while a peripheral stalk is formed by the delta and b chains.

It is found in the cell membrane. It carries out the reaction ATP + H2O + 4 H(+)(in) = ADP + phosphate + 5 H(+)(out). Its function is as follows. Produces ATP from ADP in the presence of a proton gradient across the membrane. The catalytic sites are hosted primarily by the beta subunits. This is ATP synthase subunit beta from Shouchella clausii (strain KSM-K16) (Alkalihalobacillus clausii).